The sequence spans 211 residues: Thiamine-phosphate synthase (211 aa).

Residues 37-41 (QLRIK) and Asn69 each bind 4-amino-2-methyl-5-(diphosphooxymethyl)pyrimidine. Positions 70 and 89 each coordinate Mg(2+). Ser108 contacts 4-amino-2-methyl-5-(diphosphooxymethyl)pyrimidine. 134 to 136 (TQT) provides a ligand contact to 2-[(2R,5Z)-2-carboxy-4-methylthiazol-5(2H)-ylidene]ethyl phosphate. Lys137 provides a ligand contact to 4-amino-2-methyl-5-(diphosphooxymethyl)pyrimidine. 2-[(2R,5Z)-2-carboxy-4-methylthiazol-5(2H)-ylidene]ethyl phosphate contacts are provided by residues Gly166 and 186–187 (VS).

The protein belongs to the thiamine-phosphate synthase family. The cofactor is Mg(2+).

The enzyme catalyses 2-[(2R,5Z)-2-carboxy-4-methylthiazol-5(2H)-ylidene]ethyl phosphate + 4-amino-2-methyl-5-(diphosphooxymethyl)pyrimidine + 2 H(+) = thiamine phosphate + CO2 + diphosphate. It carries out the reaction 2-(2-carboxy-4-methylthiazol-5-yl)ethyl phosphate + 4-amino-2-methyl-5-(diphosphooxymethyl)pyrimidine + 2 H(+) = thiamine phosphate + CO2 + diphosphate. The catalysed reaction is 4-methyl-5-(2-phosphooxyethyl)-thiazole + 4-amino-2-methyl-5-(diphosphooxymethyl)pyrimidine + H(+) = thiamine phosphate + diphosphate. It participates in cofactor biosynthesis; thiamine diphosphate biosynthesis; thiamine phosphate from 4-amino-2-methyl-5-diphosphomethylpyrimidine and 4-methyl-5-(2-phosphoethyl)-thiazole: step 1/1. Its function is as follows. Condenses 4-methyl-5-(beta-hydroxyethyl)thiazole monophosphate (THZ-P) and 2-methyl-4-amino-5-hydroxymethyl pyrimidine pyrophosphate (HMP-PP) to form thiamine monophosphate (TMP). The protein is Thiamine-phosphate synthase of Salmonella choleraesuis (strain SC-B67).